A 196-amino-acid polypeptide reads, in one-letter code: Orotate phosphoribosyltransferase (196 aa).

A 5-phospho-alpha-D-ribose 1-diphosphate-binding site is contributed by 117–125 (EDIVTTGLS). Orotate is bound by residues threonine 121 and arginine 149.

This sequence belongs to the purine/pyrimidine phosphoribosyltransferase family. PyrE subfamily. Homodimer. Requires Mg(2+) as cofactor.

The enzyme catalyses orotidine 5'-phosphate + diphosphate = orotate + 5-phospho-alpha-D-ribose 1-diphosphate. Its pathway is pyrimidine metabolism; UMP biosynthesis via de novo pathway; UMP from orotate: step 1/2. Functionally, catalyzes the transfer of a ribosyl phosphate group from 5-phosphoribose 1-diphosphate to orotate, leading to the formation of orotidine monophosphate (OMP). The sequence is that of Orotate phosphoribosyltransferase from Methylobacterium sp. (strain 4-46).